Here is a 222-residue protein sequence, read N- to C-terminus: C-reactive protein (222 aa).

The signal sequence occupies residues 1–19; sequence MEKLSLCLLVIISLSNAFA. Position 20 is a pyrrolidone carboxylic acid (Q20). The 199-residue stretch at 24–222 folds into the Pentraxin (PTX) domain; the sequence is IGKAFVFPKE…EVYVKPQLWP (199 aa). A disulfide bridge links C55 with C113. Ca(2+)-binding residues include N78, E154, Q155, D156, and Q166.

Belongs to the pentraxin family. Homopentamer. Pentraxin (or pentaxin) have a discoid arrangement of 5 non-covalently bound subunits. Interacts with FCN1; may regulate monocyte activation by FCN1. Requires Ca(2+) as cofactor. As to expression, found in plasma.

The protein resides in the secreted. Its function is as follows. Displays several functions associated with host defense: it promotes agglutination, bacterial capsular swelling, phagocytosis and complement fixation through its calcium-dependent binding to phosphorylcholine. Can interact with DNA and histones and may scavenge nuclear material released from damaged circulating cells. The polypeptide is C-reactive protein (CRP) (Sus scrofa (Pig)).